A 308-amino-acid chain; its full sequence is Membrane protein insertase YidC 1 (308 aa).

Positions 1 to 22 (MKSIKRFALSAMGAAMLLVLTG) are cleaved as a signal peptide. C23 carries N-palmitoyl cysteine lipidation. Residue C23 is the site of S-diacylglycerol cysteine attachment. The next 5 membrane-spanning stretches (helical) occupy residues 60–80 (FGVA…PLGI), 135–155 (FGGV…AIYF), 168–188 (YLGI…GVLY), 211–225 (MIYM…FSLF), and 230–252 (VTLY…NYIV). The disordered stretch occupies residues 263–308 (ELAKNPSKASAFSTPSGRKDVTPEQPTAITSKKKHKNRNAGKQRSR). The span at 269–278 (SKASAFSTPS) shows a compositional bias: polar residues. Basic residues predominate over residues 293–308 (SKKKHKNRNAGKQRSR).

It belongs to the OXA1/ALB3/YidC family. Type 2 subfamily.

Its subcellular location is the cell membrane. Functionally, required for the insertion and/or proper folding and/or complex formation of integral membrane proteins into the membrane. Involved in integration of membrane proteins that insert both dependently and independently of the Sec translocase complex, as well as at least some lipoproteins. The protein is Membrane protein insertase YidC 1 of Streptococcus pneumoniae (strain ATCC BAA-255 / R6).